Consider the following 307-residue polypeptide: Elongation factor Ts (307 aa).

The segment at 79–82 (TDFV) is involved in Mg(2+) ion dislocation from EF-Tu.

This sequence belongs to the EF-Ts family.

Its subcellular location is the cytoplasm. Its function is as follows. Associates with the EF-Tu.GDP complex and induces the exchange of GDP to GTP. It remains bound to the aminoacyl-tRNA.EF-Tu.GTP complex up to the GTP hydrolysis stage on the ribosome. This Rhizobium meliloti (strain 1021) (Ensifer meliloti) protein is Elongation factor Ts.